The following is a 627-amino-acid chain: MSNHRSNFRDYQREGIRANNAGTSGDAVRQNGNPISVAKHVDGKKSVYMLFLRQIGQKKFLTEQGHRYNQNDQADKDIMTRYYHGMCPDLKQKFEREVAEHNGNRGLVIKTKHQRAQRNREMRHRNPDEFQQLRRAHLETLSQTPSVIALPRDINHVLHITEDLDAFCLANRKKAKRIMTSYIAQRSDDPGNPLLCEDYTMQIVSVFPVAYAFKPSINKLSSYPAEISVTTFNLKNGIIQNESRFVKFDAAWFYPDADDIGHEELSRKAMADELGISPNGPADGCEPYEVFEWLQHLLKQHPKSPILCDRAQFNFVYYGIKTLATYTGINAITFFQEVIIPSILSIQDFTSVILEKAPTDVPRVWRDVDICNQFQYHFLIPRTELNLFCSFHENKPSPTKYNCVKAHNARLLDNFFTVIKGNRLQGFVISPPVHEICIQDGSDTSLPQTILARTISRNDAEVYAARQRDTDEQYDVHQEGPSNHDQYEFASEPLDFEEDSDEENYNEQLDVPYSYNDHFISSSSVREPEHPSARSRDVAPNVQQESVVVPAPRRLSPQRAPRPSQNSPNAYSERKSFSAFPSEDPSEDYETPIISHIMNRNEADQYFNILDSVKPGQKYKIIKFDDF.

Disordered stretches follow at residues 1 to 31 (MSNH…VRQN), 467 to 487 (QRDT…HDQY), and 523 to 589 (SSVR…SEDY). 3 stretches are compositionally biased toward basic and acidic residues: residues 7-16 (NFRDYQREGI), 467-478 (QRDTDEQYDVHQ), and 526-537 (REPEHPSARSRD).

This sequence belongs to the maelstrom family. In terms of assembly, interacts with rde-11 (via RING-type zinc finger domain). Interacts with ergo-1.

Functionally, in complex with rde-11, required in the endogenous and exogenous siRNA pathway for biogenesis and accumulation of secondary small interfering RNA (siRNA) intermediates, such as 22G-siRNAs derived from ergo-1 targets. The polypeptide is RNA interference defective protein 10 (Caenorhabditis elegans).